The following is a 352-amino-acid chain: Ion-translocating oxidoreductase complex subunit D (352 aa).

5 helical membrane-spanning segments follow: residues 20-40, 42-62, 78-109, 123-143, and 148-168; these read IMLL…WFFG, GTLV…ALVL, ALLT…VIIA, PAMI…TSWL, and IAVN…GHTA. The residue at position 187 (Thr-187) is an FMN phosphoryl threonine. 5 helical membrane passes run 214 to 234, 242 to 262, 267 to 287, 301 to 321, and 322 to 342; these read ILAG…GLWL, WHIP…GWLF, LAAP…FFIL, LIFG…GGYP, and DGVA…DYYT.

Belongs to the NqrB/RnfD family. As to quaternary structure, the complex is composed of six subunits: RsxA, RsxB, RsxC, RsxD, RsxE and RsxG. FMN serves as cofactor.

It is found in the cell inner membrane. In terms of biological role, part of a membrane-bound complex that couples electron transfer with translocation of ions across the membrane. Required to maintain the reduced state of SoxR. This Escherichia coli (strain SE11) protein is Ion-translocating oxidoreductase complex subunit D.